A 182-amino-acid polypeptide reads, in one-letter code: Early nodulin-like protein 14 (182 aa).

A signal peptide spans 1 to 28; sequence MFLSASMASSSLHVAIFSLIFLFSLAAA. The 105-residue stretch at 29–133 folds into the Phytocyanin domain; that stretch reads NEVTVGGKSG…GQKLSLVVIS (105 aa). Cysteine 87 and cysteine 121 are oxidised to a cystine. Residues asparagine 88 and asparagine 95 are each glycosylated (N-linked (GlcNAc...) asparagine). Residue serine 160 is the site of GPI-anchor amidated serine attachment. A propeptide spans 161–182 (removed in mature form); it reads GSVRLGGCYVVLGLVLGLCAWF.

This sequence belongs to the early nodulin-like (ENODL) family. In terms of assembly, interacts strongly and specifically with the extracellular domain of FERONIA at the synergid cell surface. Mostly expressed in seedlings and flowers, and, to a lower extent, in roots, stems and seeds, but barely in leaves.

The protein resides in the cell membrane. May act as a carbohydrate transporter. Required, together with ENODL11, ENODL12, ENODL13, ENODL14 and ENODL15, for male-female communication and pollen tube reception and burst at the synergid cell surface of the female gametophyte. The polypeptide is Early nodulin-like protein 14 (Arabidopsis thaliana (Mouse-ear cress)).